A 180-amino-acid chain; its full sequence is Endoribonuclease YbeY (180 aa).

Histidine 118, histidine 122, and histidine 128 together coordinate Zn(2+).

The protein belongs to the endoribonuclease YbeY family. It depends on Zn(2+) as a cofactor.

It localises to the cytoplasm. Its function is as follows. Single strand-specific metallo-endoribonuclease involved in late-stage 70S ribosome quality control and in maturation of the 3' terminus of the 16S rRNA. In Rhodococcus erythropolis (strain PR4 / NBRC 100887), this protein is Endoribonuclease YbeY.